The following is a 176-amino-acid chain: Ribosome rescue factor SmrB (176 aa).

The 76-residue stretch at Leu98–Glu173 folds into the Smr domain.

Belongs to the SmrB family. As to quaternary structure, associates with collided ribosomes, but not with correctly translating polysomes.

Functionally, acts as a ribosome collision sensor. Detects stalled/collided disomes (pairs of ribosomes where the leading ribosome is stalled and a second ribosome has collided with it) and endonucleolytically cleaves mRNA at the 5' boundary of the stalled ribosome. Stalled/collided disomes form a new interface (primarily via the 30S subunits) that binds SmrB. Cleaved mRNA becomes available for tmRNA ligation, leading to ribosomal subunit dissociation and rescue of stalled ribosomes. In Buchnera aphidicola subsp. Schizaphis graminum (strain Sg), this protein is Ribosome rescue factor SmrB.